The sequence spans 159 residues: Late embryogenesis abundant protein 50 (159 aa).

SMP domains follow at residues 30–87 (TTLT…RNQK) and 96–151 (NLGD…YKLN).

It belongs to the LEA type SMP family.

It is found in the cytoplasm. The protein resides in the nucleus. Functionally, LEA proteins are late embryonic proteins abundant in higher plant seed embryos. The function of those proteins is not known. This chain is Late embryogenesis abundant protein 50, found in Arabidopsis thaliana (Mouse-ear cress).